The following is a 927-amino-acid chain: Isoleucine--tRNA ligase (927 aa).

The 'HIGH' region signature appears at proline 57–histidine 67. Glutamate 553 serves as a coordination point for L-isoleucyl-5'-AMP. Positions lysine 594–serine 598 match the 'KMSKS' region motif. Position 597 (lysine 597) interacts with ATP. The Zn(2+) site is built by cysteine 886, cysteine 889, cysteine 906, and cysteine 909.

Belongs to the class-I aminoacyl-tRNA synthetase family. IleS type 1 subfamily. As to quaternary structure, monomer. Zn(2+) serves as cofactor.

The protein localises to the cytoplasm. It carries out the reaction tRNA(Ile) + L-isoleucine + ATP = L-isoleucyl-tRNA(Ile) + AMP + diphosphate. Functionally, catalyzes the attachment of isoleucine to tRNA(Ile). As IleRS can inadvertently accommodate and process structurally similar amino acids such as valine, to avoid such errors it has two additional distinct tRNA(Ile)-dependent editing activities. One activity is designated as 'pretransfer' editing and involves the hydrolysis of activated Val-AMP. The other activity is designated 'posttransfer' editing and involves deacylation of mischarged Val-tRNA(Ile). This is Isoleucine--tRNA ligase from Lactobacillus acidophilus (strain ATCC 700396 / NCK56 / N2 / NCFM).